Here is a 480-residue protein sequence, read N- to C-terminus: G-protein coupled receptor seb-2 (480 aa).

The Extracellular portion of the chain corresponds to 1 to 222 (MNPSISTAGA…CMSNGDVEAR (222 aa)). A glycan (N-linked (GlcNAc...) asparagine) is linked at Asn-95. The chain crosses the membrane as a helical span at residues 223-243 (ILAGLLTYSASVIFLIPAVFL). The Cytoplasmic segment spans residues 244-261 (LTLLRPIRCQPMFILHRH). Residues 262 to 282 (LLISCLLYGAFYLITVSLFVV) form a helical membrane-spanning segment. Over 283–305 (NDAPLSSQVFQNHLFCRLLFSIQ) the chain is Extracellular. The chain crosses the membrane as a helical span at residues 306-328 (LRYLRLTNFTWMLAEAVYLWRLL). The Cytoplasmic portion of the chain corresponds to 329–343 (HTAQHSEGETLRSYK). The helical transmembrane segment at 344–364 (VICWGVPGVITVVYIFVRSLN) threads the bilayer. Over 365–386 (DDVGMCWIENSTVAWIEWMIIT) the chain is Extracellular. A helical membrane pass occupies residues 387 to 407 (PSLLAMGVNLLLLGLIVYILV). The Cytoplasmic segment spans residues 408–423 (KKLRCDPHLERIQYRK). Residues 424–444 (AVRGALMLIPVFGVQQLLTIY) traverse the membrane as a helical segment. Residues 445–480 (RFRNVCLIYRLLHKSFCRRMCSEILVITSGEAGSRS) are Extracellular-facing.

It belongs to the G-protein coupled receptor 2 family. As to expression, present in the head body-wall muscles from the L1 larval stage through to adulthood. Also expressed between L4 and the adult molt in vulval vm1 muscle cells. These cells play a role in opening the vulva during egg laying.

It localises to the cell membrane. Its function is as follows. Not known. Putative receptor. The protein is G-protein coupled receptor seb-2 of Caenorhabditis elegans.